The primary structure comprises 117 residues: Immunoglobulin heavy variable 3-48 (117 aa).

Residues 1-19 form the signal peptide; the sequence is MELGLCWVFLVAILEGVQC. The segment at 20 to 44 is framework-1; it reads EVQLVESGGGLVQPGGSLRLSCAAS. Residues 20–117 form the Ig-like domain; it reads EVQLVESGGG…EDTAVYYCAR (98 aa). A disulfide bridge connects residues Cys-41 and Cys-115. The segment at 45–52 is complementarity-determining-1; it reads GFTFSSYE. Residues 53–69 form a framework-2 region; the sequence is MNWVRQAPGKGLEWVSY. The complementarity-determining-2 stretch occupies residues 70-77; sequence ISSSGSTI. Residues 78–115 are framework-3; sequence YYADSVKGRFTISRDNAKNSLYLQMNSLRAEDTAVYYC. The complementarity-determining-3 stretch occupies residues 116-117; it reads AR.

Immunoglobulins are composed of two identical heavy chains and two identical light chains; disulfide-linked. Post-translationally, the N-terminus is blocked.

Its subcellular location is the secreted. It is found in the cell membrane. Its function is as follows. V region of the variable domain of immunoglobulin heavy chains that participates in the antigen recognition. Immunoglobulins, also known as antibodies, are membrane-bound or secreted glycoproteins produced by B lymphocytes. In the recognition phase of humoral immunity, the membrane-bound immunoglobulins serve as receptors which, upon binding of a specific antigen, trigger the clonal expansion and differentiation of B lymphocytes into immunoglobulins-secreting plasma cells. Secreted immunoglobulins mediate the effector phase of humoral immunity, which results in the elimination of bound antigens. The antigen binding site is formed by the variable domain of one heavy chain, together with that of its associated light chain. Thus, each immunoglobulin has two antigen binding sites with remarkable affinity for a particular antigen. The variable domains are assembled by a process called V-(D)-J rearrangement and can then be subjected to somatic hypermutations which, after exposure to antigen and selection, allow affinity maturation for a particular antigen. In Homo sapiens (Human), this protein is Immunoglobulin heavy variable 3-48.